Consider the following 810-residue polypeptide: Phospholipase D alpha 2 (810 aa).

The C2 domain occupies 1–126 (MEECLLHGRL…LHGEEVDRWV (126 aa)). Asp-187 provides a ligand contact to Ca(2+). Residues 327-365 (TMFTHHQKIVVVDSEMPSGGSRSRRIVSFVGGLDLCDGR) form the PLD phosphodiesterase 1 domain. Catalysis depends on residues His-332, Lys-334, and Asp-339. His-332 is an a 1,2-diacyl-sn-glycero-3-phosphate binding site. The Ca(2+) site is built by His-371 and His-405. Gln-521 and His-661 together coordinate a 1,2-diacyl-sn-glycero-3-phosphate. The 28-residue stretch at 656 to 683 (FMIYVHTKMMIVDDEYIIIGSANINQRS) folds into the PLD phosphodiesterase 2 domain. Active-site residues include His-661, Lys-663, and Asp-668. Glu-722 lines the Ca(2+) pocket.

Belongs to the phospholipase D family. C2-PLD subfamily. The cofactor is Ca(2+). Highly expressed in roots, stems and flowers, moderately in leaves, seedlings and siliques. Not detected in dry seeds.

It localises to the cytoplasm. The protein resides in the membrane. Its subcellular location is the vacuole. It is found in the cytoplasmic vesicle. The protein localises to the clathrin-coated vesicle. It catalyses the reaction a 1,2-diacyl-sn-glycero-3-phosphocholine + H2O = a 1,2-diacyl-sn-glycero-3-phosphate + choline + H(+). Hydrolyzes glycerol-phospholipids at the terminal phosphodiesteric bond to generate phosphatidic acids (PA). Plays an important role in various cellular processes, including phytohormone action and response to stress, characterized by acidification of the cell. The chain is Phospholipase D alpha 2 from Arabidopsis thaliana (Mouse-ear cress).